Here is an 837-residue protein sequence, read N- to C-terminus: Striatin-interacting protein 1 (837 aa).

Met-1 carries the post-translational modification N-acetylmethionine. Disordered stretches follow at residues 1–67 (MEPA…ESPD) and 333–423 (AASP…KGLP). The segment covering 18–35 (PQPPPPPPPATAQPPPGA) has biased composition (pro residues). Positions 47–60 (KAREFNRNQRKDSE) are enriched in basic and acidic residues. A phosphoserine mark is found at Ser-59, Ser-335, and Ser-339. The span at 356–377 (KALIKQDNLDAFNERDPYKADD) shows a compositional bias: basic and acidic residues. The segment covering 378-391 (SREEEEENDDDSSL) has biased composition (acidic residues). A Phosphoserine modification is found at Ser-788. Residues 796–837 (DNCLQSVLGQRVDLPEDFQMNYDLWLEREVFSKPISWEELLQ) are required for STRIPAK core complex formation.

It belongs to the STRIP family. Part of the core of STRIPAK complexes composed of PP2A catalytic and scaffolding subunits, the striatins (PP2A regulatory subunits), the striatin-associated proteins MOB4, STRIP1 and STRIP2, PDCD10 and members of the STE20 kinases, such as STK24 and STK26. The STRIPAK complex can be extended by adapter proteins such as SLMAP:SIKE1, CTTNBP2 or CTTNBP2NL. Interacts with CDC42BPB. Interacts with CTTNBP2NL.

It is found in the cytoplasm. Its function is as follows. Plays a role in the regulation of cell morphology and cytoskeletal organization. Required in the cortical actin filament dynamics and cell shape. Part of the striatin-interacting phosphatase and kinase (STRIPAK) complexes. STRIPAK complexes have critical roles in protein (de)phosphorylation and are regulators of multiple signaling pathways including Hippo, MAPK, nuclear receptor and cytoskeleton remodeling. Different types of STRIPAK complexes are involved in a variety of biological processes such as cell growth, differentiation, apoptosis, metabolism and immune regulation. The protein is Striatin-interacting protein 1 (Strip1) of Mus musculus (Mouse).